The following is a 146-amino-acid chain: Ribonuclease H (146 aa).

The 143-residue stretch at 1 to 143 folds into the RNase H type-1 domain; the sequence is MKKQVTIYTD…CDQLAREAIK (143 aa). Mg(2+)-binding residues include Asp10, Glu48, Asp70, and Asp135.

The protein belongs to the RNase H family. In terms of assembly, monomer. The cofactor is Mg(2+).

It localises to the cytoplasm. It carries out the reaction Endonucleolytic cleavage to 5'-phosphomonoester.. Its function is as follows. Endonuclease that specifically degrades the RNA of RNA-DNA hybrids. This is Ribonuclease H from Chlorobium chlorochromatii (strain CaD3).